The primary structure comprises 198 residues: Probable GTP-binding protein EngB (198 aa).

The EngB-type G domain maps to 22–195 (DLPEIALAGR…WKAIHKFTKT (174 aa)). GTP is bound by residues 30-37 (GRSNVGKS), 57-61 (GKTQT), 75-78 (DVPG), 142-145 (TKAD), and 174-176 (FSS). Positions 37 and 59 each coordinate Mg(2+).

The protein belongs to the TRAFAC class TrmE-Era-EngA-EngB-Septin-like GTPase superfamily. EngB GTPase family. It depends on Mg(2+) as a cofactor.

Functionally, necessary for normal cell division and for the maintenance of normal septation. In Bacillus anthracis (strain A0248), this protein is Probable GTP-binding protein EngB.